We begin with the raw amino-acid sequence, 307 residues long: Farnesol kinase, chloroplastic (307 aa).

A chloroplast-targeting transit peptide spans 1–65 (MATTSTTTKL…TKIRKSSLAA (65 aa)). The next 7 helical transmembrane spans lie at 77–97 (VCAFGVTSIVAFSCLGFWGEI), 116–136 (IGLVFMLCWPLFSSGIQGALF), 137–157 (ASLVPGLNIVRMLLLGLGVYH), 177–194 (GPLYYVLSITSACIYYWK), 197–217 (PIAIAVICNLCAGDGMADIVG), 237–257 (IGMATAGFLASVAYMYYFASF), and 265–285 (GMILRFLVISIASALVESLPI).

It belongs to the polyprenol kinase family.

The protein resides in the plastid. It is found in the chloroplast membrane. The enzyme catalyses (2E,6E)-farnesol + CTP = (2E,6E)-farnesyl phosphate + CDP + H(+). It catalyses the reaction (2E,6E)-farnesol + ATP = (2E,6E)-farnesyl phosphate + ADP + H(+). It carries out the reaction (2E)-geraniol + ATP = (2E)-geranyl phosphate + ADP + H(+). The catalysed reaction is (2E,6E,10E)-geranylgeraniol + ATP = (2E,6E,10E)-geranylgeranyl phosphate + ADP + H(+). Functionally, kinase involved in negative regulation of abscisic acid (ABA) signaling. Substrate preference is farnesol &gt; geraniol &gt; geranylgeraniol, but has no activity with farnesyl phosphate. Can use CTP &gt; ATP &gt; GTP = UTP as phosphoryl donor. This is Farnesol kinase, chloroplastic from Arabidopsis thaliana (Mouse-ear cress).